The chain runs to 112 residues: MLEQTSYRVERISELIRRELTLLLKTTTKDPRLSGVMITDVLASRDLSSAKVFYTVTKEDRTVVEPILSKASGFFRSRLSKTLDLRHTPALGFIFDSASNTGARIEQLLSKL.

The protein belongs to the RbfA family. As to quaternary structure, monomer. Binds 30S ribosomal subunits, but not 50S ribosomal subunits or 70S ribosomes.

The protein localises to the cytoplasm. Functionally, one of several proteins that assist in the late maturation steps of the functional core of the 30S ribosomal subunit. Associates with free 30S ribosomal subunits (but not with 30S subunits that are part of 70S ribosomes or polysomes). Required for efficient processing of 16S rRNA. May interact with the 5'-terminal helix region of 16S rRNA. The protein is Ribosome-binding factor A of Ruthia magnifica subsp. Calyptogena magnifica.